The sequence spans 964 residues: Translation initiation factor IF-2 (964 aa).

Positions 26–375 (AAGVSKRSPE…QNNQHAFQAP (350 aa)) are disordered. 7 stretches are compositionally biased toward basic and acidic residues: residues 49 to 60 (YLKRSHGAREDS), 91 to 103 (VRPD…EAPK), 118 to 154 (AKPE…KPEP), 174 to 206 (IAAR…ERRQ), 225 to 236 (PQREERRDDRRG), 243 to 252 (RGPRGNDNRG), and 328 to 339 (KGGERSWDDNKK). A tr-type G domain is found at 464–633 (PRSPVVTVMG…LLQAEVLELK (170 aa)). The interval 473–480 (GHVDHGKT) is G1. 473-480 (GHVDHGKT) serves as a coordination point for GTP. The interval 498-502 (GITQH) is G2. The interval 519–522 (DTPG) is G3. Residues 519–523 (DTPGH) and 573–576 (NKID) contribute to the GTP site. Residues 573-576 (NKID) are G4. Residues 609–611 (SAK) form a G5 region.

The protein belongs to the TRAFAC class translation factor GTPase superfamily. Classic translation factor GTPase family. IF-2 subfamily.

It is found in the cytoplasm. One of the essential components for the initiation of protein synthesis. Protects formylmethionyl-tRNA from spontaneous hydrolysis and promotes its binding to the 30S ribosomal subunits. Also involved in the hydrolysis of GTP during the formation of the 70S ribosomal complex. This Chromobacterium violaceum (strain ATCC 12472 / DSM 30191 / JCM 1249 / CCUG 213 / NBRC 12614 / NCIMB 9131 / NCTC 9757 / MK) protein is Translation initiation factor IF-2.